The sequence spans 483 residues: Probable zinc metalloprotease PTT_08196 (483 aa).

Residues Met-1–Ala-18 form the signal peptide. 2 N-linked (GlcNAc...) asparagine glycosylation sites follow: Asn-96 and Asn-121. Positions 167, 187, and 220 each coordinate Zn(2+). Asn-235 is a glycosylation site (N-linked (GlcNAc...) asparagine). Residue Asp-247 coordinates Zn(2+). N-linked (GlcNAc...) asparagine glycans are attached at residues Asn-310, Asn-362, Asn-401, Asn-411, and Asn-421. One can recognise a Fibronectin type-III domain in the interval Pro-396 to Ala-483.

This sequence belongs to the peptidase M28 family. M28B subfamily. Zn(2+) is required as a cofactor.

It localises to the secreted. The sequence is that of Probable zinc metalloprotease PTT_08196 from Pyrenophora teres f. teres (strain 0-1) (Barley net blotch fungus).